The chain runs to 597 residues: Elongation factor 4 (597 aa).

The 183-residue stretch at 2 to 184 (KNIRNFSIIA…TIVAKVPAPE (183 aa)) folds into the tr-type G domain. GTP-binding positions include 14-19 (DHGKST) and 131-134 (NKID).

It belongs to the TRAFAC class translation factor GTPase superfamily. Classic translation factor GTPase family. LepA subfamily.

The protein localises to the cell inner membrane. It carries out the reaction GTP + H2O = GDP + phosphate + H(+). In terms of biological role, required for accurate and efficient protein synthesis under certain stress conditions. May act as a fidelity factor of the translation reaction, by catalyzing a one-codon backward translocation of tRNAs on improperly translocated ribosomes. Back-translocation proceeds from a post-translocation (POST) complex to a pre-translocation (PRE) complex, thus giving elongation factor G a second chance to translocate the tRNAs correctly. Binds to ribosomes in a GTP-dependent manner. The protein is Elongation factor 4 of Francisella tularensis subsp. mediasiatica (strain FSC147).